A 321-amino-acid polypeptide reads, in one-letter code: Replication factor C small subunit (321 aa).

46–53 (GPAGVGKT) is an ATP binding site.

This sequence belongs to the activator 1 small subunits family. RfcS subfamily. As to quaternary structure, heterohexamer composed of four small subunits (RfcS) and two large subunits (RfcL).

In terms of biological role, part of the RFC clamp loader complex which loads the PCNA sliding clamp onto DNA. The complex possesses DNA-dependent ATPase activity which is further stimulated by PCNA. In conjunction with PCNA stimulates DNA synthesis by PolB, relieving inhibition by replication protein A (RPA). This Methanothermobacter thermautotrophicus (strain ATCC 29096 / DSM 1053 / JCM 10044 / NBRC 100330 / Delta H) (Methanobacterium thermoautotrophicum) protein is Replication factor C small subunit (rfcS).